Consider the following 839-residue polypeptide: Protein translocase subunit SecA (839 aa).

Residues Gln-85, 103-107, and Asp-492 each bind ATP; that span reads GEGKT. The segment at 794-820 is disordered; it reads EINYSGPDAGDTKKEPVRRKEKKIGRN. Cys-823, Cys-825, Cys-834, and Cys-835 together coordinate Zn(2+).

Belongs to the SecA family. In terms of assembly, monomer and homodimer. Part of the essential Sec protein translocation apparatus which comprises SecA, SecYEG and auxiliary proteins SecDF. Other proteins may also be involved. Requires Zn(2+) as cofactor.

Its subcellular location is the cell membrane. The protein localises to the cytoplasm. The catalysed reaction is ATP + H2O + cellular proteinSide 1 = ADP + phosphate + cellular proteinSide 2.. Part of the Sec protein translocase complex. Interacts with the SecYEG preprotein conducting channel. Has a central role in coupling the hydrolysis of ATP to the transfer of proteins into and across the cell membrane, serving as an ATP-driven molecular motor driving the stepwise translocation of polypeptide chains across the membrane. The sequence is that of Protein translocase subunit SecA from Clostridium acetobutylicum (strain ATCC 824 / DSM 792 / JCM 1419 / IAM 19013 / LMG 5710 / NBRC 13948 / NRRL B-527 / VKM B-1787 / 2291 / W).